A 410-amino-acid polypeptide reads, in one-letter code: Probable 2,3-bisphosphoglycerate-independent phosphoglycerate mutase (410 aa).

This sequence belongs to the BPG-independent phosphoglycerate mutase family. A-PGAM subfamily.

The enzyme catalyses (2R)-2-phosphoglycerate = (2R)-3-phosphoglycerate. Its pathway is carbohydrate degradation; glycolysis; pyruvate from D-glyceraldehyde 3-phosphate: step 3/5. In terms of biological role, catalyzes the interconversion of 2-phosphoglycerate and 3-phosphoglycerate. This Deinococcus radiodurans (strain ATCC 13939 / DSM 20539 / JCM 16871 / CCUG 27074 / LMG 4051 / NBRC 15346 / NCIMB 9279 / VKM B-1422 / R1) protein is Probable 2,3-bisphosphoglycerate-independent phosphoglycerate mutase.